We begin with the raw amino-acid sequence, 169 residues long: Shikimate kinase (169 aa).

12–17 (GCGKST) serves as a coordination point for ATP. Ser16 serves as a coordination point for Mg(2+). Substrate-binding residues include Asp34, Arg57, and Gly79. Arg116 contributes to the ATP binding site. Arg133 contacts substrate.

It belongs to the shikimate kinase family. In terms of assembly, monomer. Requires Mg(2+) as cofactor.

The protein localises to the cytoplasm. It catalyses the reaction shikimate + ATP = 3-phosphoshikimate + ADP + H(+). The protein operates within metabolic intermediate biosynthesis; chorismate biosynthesis; chorismate from D-erythrose 4-phosphate and phosphoenolpyruvate: step 5/7. Functionally, catalyzes the specific phosphorylation of the 3-hydroxyl group of shikimic acid using ATP as a cosubstrate. The polypeptide is Shikimate kinase (Clostridium beijerinckii (strain ATCC 51743 / NCIMB 8052) (Clostridium acetobutylicum)).